We begin with the raw amino-acid sequence, 308 residues long: tRNA pseudouridine synthase B (308 aa).

Aspartate 47 serves as the catalytic Nucleophile.

This sequence belongs to the pseudouridine synthase TruB family. Type 1 subfamily.

It carries out the reaction uridine(55) in tRNA = pseudouridine(55) in tRNA. Its function is as follows. Responsible for synthesis of pseudouridine from uracil-55 in the psi GC loop of transfer RNAs. This chain is tRNA pseudouridine synthase B, found in Rhodospirillum rubrum (strain ATCC 11170 / ATH 1.1.1 / DSM 467 / LMG 4362 / NCIMB 8255 / S1).